Consider the following 308-residue polypeptide: Glutaminase 2 (308 aa).

Ser-66, Asn-117, Glu-161, Asn-168, Tyr-192, Tyr-244, and Val-262 together coordinate substrate.

This sequence belongs to the glutaminase family. As to quaternary structure, homotetramer.

It carries out the reaction L-glutamine + H2O = L-glutamate + NH4(+). The polypeptide is Glutaminase 2 (Escherichia coli O157:H7).